The sequence spans 183 residues: Putative manganese efflux pump MntP 1 (183 aa).

6 helical membrane passes run 6–26, 36–56, 64–84, 100–120, 130–150, and 158–178; these read LFLL…CIGI, MIFV…GGYI, IVPI…ILMI, IMYL…GFTT, LFMS…LGII, and ISII…LFGL.

It belongs to the MntP (TC 9.B.29) family.

It is found in the cell membrane. Probably functions as a manganese efflux pump. This chain is Putative manganese efflux pump MntP 1, found in Clostridium botulinum (strain Hall / ATCC 3502 / NCTC 13319 / Type A).